A 190-amino-acid polypeptide reads, in one-letter code: Xanthine phosphoribosyltransferase (190 aa).

The xanthine site is built by Leu-20 and Asn-27. 128–132 (ANGHA) contacts 5-phospho-alpha-D-ribose 1-diphosphate. Xanthine is bound at residue Lys-156.

This sequence belongs to the purine/pyrimidine phosphoribosyltransferase family. Xpt subfamily. Homodimer.

It is found in the cytoplasm. It catalyses the reaction XMP + diphosphate = xanthine + 5-phospho-alpha-D-ribose 1-diphosphate. Its pathway is purine metabolism; XMP biosynthesis via salvage pathway; XMP from xanthine: step 1/1. Functionally, converts the preformed base xanthine, a product of nucleic acid breakdown, to xanthosine 5'-monophosphate (XMP), so it can be reused for RNA or DNA synthesis. The chain is Xanthine phosphoribosyltransferase from Pseudomonas aeruginosa (strain ATCC 15692 / DSM 22644 / CIP 104116 / JCM 14847 / LMG 12228 / 1C / PRS 101 / PAO1).